A 185-amino-acid polypeptide reads, in one-letter code: Putative manganese efflux pump MntP (185 aa).

Transmembrane regions (helical) follow at residues 4 to 24 (LLLS…SVSL), 43 to 63 (IFFG…GVPI), 67 to 87 (IDPF…GKMI), 107 to 127 (LLLA…FALI), 131 to 151 (VLLP…FGVL), and 165 to 185 (QILG…EYCL).

This sequence belongs to the MntP (TC 9.B.29) family.

The protein localises to the cell membrane. Its function is as follows. Probably functions as a manganese efflux pump. The sequence is that of Putative manganese efflux pump MntP from Methanocorpusculum labreanum (strain ATCC 43576 / DSM 4855 / Z).